Reading from the N-terminus, the 340-residue chain is Dihydroorotate dehydrogenase (quinone) (340 aa).

Residues 65–69 (AGLDK) and Thr89 each bind FMN. A substrate-binding site is contributed by Lys69. 114-118 (NRMGF) lines the substrate pocket. Positions 142 and 175 each coordinate FMN. Asn175 contributes to the substrate binding site. Catalysis depends on Ser178, which acts as the Nucleophile. A substrate-binding site is contributed by Asn180. Residues Lys220 and Thr248 each coordinate FMN. Residue 249 to 250 (NT) participates in substrate binding. FMN-binding positions include Gly271, Gly300, and 321 to 322 (YT).

The protein belongs to the dihydroorotate dehydrogenase family. Type 2 subfamily. Monomer. FMN is required as a cofactor.

Its subcellular location is the cell membrane. It catalyses the reaction (S)-dihydroorotate + a quinone = orotate + a quinol. Its pathway is pyrimidine metabolism; UMP biosynthesis via de novo pathway; orotate from (S)-dihydroorotate (quinone route): step 1/1. In terms of biological role, catalyzes the conversion of dihydroorotate to orotate with quinone as electron acceptor. The protein is Dihydroorotate dehydrogenase (quinone) of Paraburkholderia xenovorans (strain LB400).